Here is a 229-residue protein sequence, read N- to C-terminus: Large ribosomal subunit protein uL1 (229 aa).

In terms of assembly, part of the 50S ribosomal subunit.

Directly binds to 23S rRNA. Forms what is known as the L1 stalk, which protrudes beyond the 70S ribosome surface. The stalk is preferentially stabilized in 70S versus 50S crystals. Interacts with the E site tRNA, blocking the exit path. This blockage implies that this section of the ribosome must be able to move to release the deacetylated tRNA. In terms of biological role, protein L1 is also a translational repressor protein, it controls the translation of the L11 operon by binding to its mRNA. The sequence is that of Large ribosomal subunit protein uL1 (rplA) from Thermus thermophilus (strain ATCC 27634 / DSM 579 / HB8).